The following is a 157-amino-acid chain: MSGHSYASVVDRIYSRKSSELYDNIAYLHHPSGVTVVVLRNIPESEVVEVDFGTTKKHGADRSTNQVSGKGKKGALILQPDSKLCTFKCKDGSEHVVRAGVRGTLVEMNDRLKTTPDFIRTAPDNQGFIAIITYGAGVRETEGMGDDLPPKRLFLKS.

This is an uncharacterized protein from Caenorhabditis elegans.